Here is a 131-residue protein sequence, read N- to C-terminus: Ribonuclease VapC4 (131 aa).

The PINc domain maps to 4 to 106 (IVPDTNFLIY…IVATNDKELK (103 aa)). Residues aspartate 7 and aspartate 102 each contribute to the Mg(2+) site.

The protein belongs to the PINc/VapC protein family. Mg(2+) serves as cofactor.

Functionally, toxic component of a type II toxin-antitoxin (TA) system. An RNase. Its cognate antitoxin is VapB4. This is Ribonuclease VapC4 from Methanocaldococcus jannaschii (strain ATCC 43067 / DSM 2661 / JAL-1 / JCM 10045 / NBRC 100440) (Methanococcus jannaschii).